The following is a 318-amino-acid chain: Transcription factor zip-4 (318 aa).

A compositionally biased stretch (polar residues) spans 1–13 (MYNYNYSRGNKSM). Disordered stretches follow at residues 1-20 (MYNY…PRFH), 147-205 (EKKP…TAAA), 238-257 (NNDA…LQKD), and 273-318 (ELQS…KSNY). Residues 173–190 (DYQEEGETSLSDNDESVD) are compositionally biased toward acidic residues. One can recognise a bZIP domain in the interval 228-291 (EPIYKLKRAR…ERDQQLIKQL (64 aa)). Residues 232 to 266 (KLKRARNNDAVRKSRNKAKELQLQKDEEYDEMKKR) are basic motif. Positions 242–280 (VRKSRNKAKELQLQKDEEYDEMKKRITQLEAELQSEREG) form a coiled coil. A leucine-zipper region spans residues 267-274 (ITQLEAEL). Residues 275–298 (QSEREGRERDQQLIKQLIREKEST) show a composition bias toward basic and acidic residues. The segment covering 307–318 (RNALESFNKSNY) has biased composition (polar residues).

This sequence belongs to the bZIP family. C/EBP subfamily.

It localises to the nucleus. Its function is as follows. Transcription factor that binds to the promoter and the enhancer regions of target genes. Involved in responding to mitochondrial damage. Has a protective role in response to infection by the Gram-negative bacterium P.aeruginosa. In Caenorhabditis elegans, this protein is Transcription factor zip-4.